A 417-amino-acid polypeptide reads, in one-letter code: Tyrosine--tRNA ligase (417 aa).

An L-tyrosine-binding site is contributed by tyrosine 34. The short motif at 39-48 (PTGDSMHIGH) is the 'HIGH' region element. L-tyrosine-binding residues include tyrosine 165 and glutamine 169. Positions 227–231 (KFGKS) match the 'KMSKS' region motif. Lysine 230 lines the ATP pocket. In terms of domain architecture, S4 RNA-binding spans 349-417 (ENIVLWLVDT…KKKYFLARVK (69 aa)).

Belongs to the class-I aminoacyl-tRNA synthetase family. TyrS type 1 subfamily. In terms of assembly, homodimer.

It localises to the cytoplasm. It catalyses the reaction tRNA(Tyr) + L-tyrosine + ATP = L-tyrosyl-tRNA(Tyr) + AMP + diphosphate + H(+). In terms of biological role, catalyzes the attachment of tyrosine to tRNA(Tyr) in a two-step reaction: tyrosine is first activated by ATP to form Tyr-AMP and then transferred to the acceptor end of tRNA(Tyr). In Pediococcus pentosaceus (strain ATCC 25745 / CCUG 21536 / LMG 10740 / 183-1w), this protein is Tyrosine--tRNA ligase.